The chain runs to 309 residues: Sulfate adenylyltransferase subunit 2 (309 aa).

Belongs to the PAPS reductase family. CysD subfamily. Heterodimer composed of CysD, the smaller subunit, and CysN.

The enzyme catalyses sulfate + ATP + H(+) = adenosine 5'-phosphosulfate + diphosphate. It functions in the pathway sulfur metabolism; hydrogen sulfide biosynthesis; sulfite from sulfate: step 1/3. Functionally, with CysN forms the ATP sulfurylase (ATPS) that catalyzes the adenylation of sulfate producing adenosine 5'-phosphosulfate (APS) and diphosphate, the first enzymatic step in sulfur assimilation pathway. APS synthesis involves the formation of a high-energy phosphoric-sulfuric acid anhydride bond driven by GTP hydrolysis by CysN coupled to ATP hydrolysis by CysD. In Methylorubrum extorquens (strain CM4 / NCIMB 13688) (Methylobacterium extorquens), this protein is Sulfate adenylyltransferase subunit 2.